A 207-amino-acid chain; its full sequence is Abscisic acid receptor PYL4 (207 aa).

Residues 45-195 form an START-like region; that stretch reads HEVGPNQCCS…NLQSLAKIAE (151 aa). Cysteine 52 and cysteine 176 are oxidised to a cystine. Residues lysine 81, 111–116, 138–144, and glutamate 160 each bind abscisate; these read AASSTE and RLSNYRS. A Gate loop motif is present at residues 107–111; sequence SGLPA. The Latch loop motif lies at 137 to 139; sequence HRL.

The protein belongs to the PYR/PYL/RCAR abscisic acid intracellular receptor family. In terms of assembly, monomer. Homodimer. Binds ABA on one subunit only. Interacts with HAB1, ABI1 and ABI2, and possibly with other PP2Cs. Binds to CARs protein in an ABA-independent manner, both at the plasma membrane and in the nucleus. Interacts directly with CAR1 and CAR4. Interacts with TOPP1. Interacts with DDA1. Interacts with FREE1 (via N-terminus). Interacts with the E3 ubiquitin-protein ligase RSL1 at the plasma membrane. Ubiquitynated and degraded by the proteasome upon binding to the E3 ubiquitin-protein ligase RSL1 at the plasma membrane.

The protein resides in the cytoplasm. It localises to the nucleus. It is found in the cell membrane. The protein localises to the vacuole. In terms of biological role, receptor for abscisic acid (ABA) required for ABA-mediated responses such as stomatal closure and germination inhibition. Inhibits the activity of group-A protein phosphatases type 2C (PP2Cs) when activated by ABA. Can be activated by both (-)-ABA and (+)-ABA. In Arabidopsis thaliana (Mouse-ear cress), this protein is Abscisic acid receptor PYL4.